The chain runs to 824 residues: Phenylalanine--tRNA ligase beta subunit (824 aa).

Residues 39-153 enclose the tRNA-binding domain; that stretch reads SEQAKNVVIG…NIPPIGSNAV (115 aa). A B5 domain is found at 414-507; sequence KKSISVNLRM…RLIGYDNFDS (94 aa). Positions 485, 491, 494, and 495 each coordinate Mg(2+). The 94-residue stretch at 730 to 823 folds into the FDX-ACB domain; that stretch reads PTVPYMERDI…LKEKIKAELR (94 aa).

It belongs to the phenylalanyl-tRNA synthetase beta subunit family. Type 1 subfamily. In terms of assembly, tetramer of two alpha and two beta subunits. Requires Mg(2+) as cofactor.

The protein resides in the cytoplasm. It carries out the reaction tRNA(Phe) + L-phenylalanine + ATP = L-phenylalanyl-tRNA(Phe) + AMP + diphosphate + H(+). This is Phenylalanine--tRNA ligase beta subunit from Prochlorococcus marinus (strain NATL2A).